A 222-amino-acid chain; its full sequence is Leucyl/phenylalanyl-tRNA--protein transferase (222 aa).

Belongs to the L/F-transferase family.

Its subcellular location is the cytoplasm. The catalysed reaction is N-terminal L-lysyl-[protein] + L-leucyl-tRNA(Leu) = N-terminal L-leucyl-L-lysyl-[protein] + tRNA(Leu) + H(+). It catalyses the reaction N-terminal L-arginyl-[protein] + L-leucyl-tRNA(Leu) = N-terminal L-leucyl-L-arginyl-[protein] + tRNA(Leu) + H(+). The enzyme catalyses L-phenylalanyl-tRNA(Phe) + an N-terminal L-alpha-aminoacyl-[protein] = an N-terminal L-phenylalanyl-L-alpha-aminoacyl-[protein] + tRNA(Phe). Functions in the N-end rule pathway of protein degradation where it conjugates Leu, Phe and, less efficiently, Met from aminoacyl-tRNAs to the N-termini of proteins containing an N-terminal arginine or lysine. This is Leucyl/phenylalanyl-tRNA--protein transferase from Legionella pneumophila (strain Lens).